We begin with the raw amino-acid sequence, 123 residues long: Large ribosomal subunit protein bL19 (123 aa).

It belongs to the bacterial ribosomal protein bL19 family.

Functionally, this protein is located at the 30S-50S ribosomal subunit interface and may play a role in the structure and function of the aminoacyl-tRNA binding site. This is Large ribosomal subunit protein bL19 from Acinetobacter baylyi (strain ATCC 33305 / BD413 / ADP1).